The primary structure comprises 161 residues: MPSFDIVSEVDAVELKNAVENTRREMDGRFDFRGVEYSVDFKDMVVILRSESDFQCRQMVDILRGQLAKRNVDAKAMEVDDKIVHTGKTFAQNVKFKQGIEQDVAKKLIKLIKDSKVKVQAQIQGDSIRVTGKKRDDLQAIMQLARTSELGQPFQFNNFRD.

Belongs to the YajQ family.

Functionally, nucleotide-binding protein. This chain is Nucleotide-binding protein Sama_2557, found in Shewanella amazonensis (strain ATCC BAA-1098 / SB2B).